Consider the following 305-residue polypeptide: Oxygen-dependent coproporphyrinogen-III oxidase (305 aa).

Ser-97 is a substrate binding site. A divalent metal cation contacts are provided by His-101 and His-111. His-111 serves as the catalytic Proton donor. 113 to 115 (NVR) contributes to the substrate binding site. A divalent metal cation-binding residues include His-150 and His-180. The interval 245 to 280 (YVEFNLVWDRGTHFGLQSGGRTESILLSMPPLASWA) is important for dimerization. 263 to 265 (GGR) serves as a coordination point for substrate.

The protein belongs to the aerobic coproporphyrinogen-III oxidase family. Homodimer. A divalent metal cation serves as cofactor.

The protein localises to the cytoplasm. It catalyses the reaction coproporphyrinogen III + O2 + 2 H(+) = protoporphyrinogen IX + 2 CO2 + 2 H2O. The protein operates within porphyrin-containing compound metabolism; protoporphyrin-IX biosynthesis; protoporphyrinogen-IX from coproporphyrinogen-III (O2 route): step 1/1. Its function is as follows. Involved in the heme biosynthesis. Catalyzes the aerobic oxidative decarboxylation of propionate groups of rings A and B of coproporphyrinogen-III to yield the vinyl groups in protoporphyrinogen-IX. The chain is Oxygen-dependent coproporphyrinogen-III oxidase from Variovorax paradoxus (strain S110).